A 69-amino-acid polypeptide reads, in one-letter code: UPF0435 protein SH1076 (69 aa).

It belongs to the UPF0435 family.

This chain is UPF0435 protein SH1076, found in Staphylococcus haemolyticus (strain JCSC1435).